Reading from the N-terminus, the 270-residue chain is S-adenosylmethionine decarboxylase proenzyme (270 aa).

Ser-120 acts as the Schiff-base intermediate with substrate; via pyruvic acid in catalysis. Ser-120 bears the Pyruvic acid (Ser); by autocatalysis mark. The active-site Proton acceptor; for processing activity is the His-125. Residue Cys-148 is the Proton donor; for catalytic activity of the active site.

The protein belongs to the prokaryotic AdoMetDC family. Type 2 subfamily. In terms of assembly, heterooctamer of four alpha and four beta chains arranged as a tetramer of alpha/beta heterodimers. The cofactor is pyruvate. Post-translationally, is synthesized initially as an inactive proenzyme. Formation of the active enzyme involves a self-maturation process in which the active site pyruvoyl group is generated from an internal serine residue via an autocatalytic post-translational modification. Two non-identical subunits are generated from the proenzyme in this reaction, and the pyruvate is formed at the N-terminus of the alpha chain, which is derived from the carboxyl end of the proenzyme. The post-translation cleavage follows an unusual pathway, termed non-hydrolytic serinolysis, in which the side chain hydroxyl group of the serine supplies its oxygen atom to form the C-terminus of the beta chain, while the remainder of the serine residue undergoes an oxidative deamination to produce ammonia and the pyruvoyl group blocking the N-terminus of the alpha chain.

The enzyme catalyses S-adenosyl-L-methionine + H(+) = S-adenosyl 3-(methylsulfanyl)propylamine + CO2. It participates in amine and polyamine biosynthesis; S-adenosylmethioninamine biosynthesis; S-adenosylmethioninamine from S-adenosyl-L-methionine: step 1/1. Catalyzes the decarboxylation of S-adenosylmethionine to S-adenosylmethioninamine (dcAdoMet), the propylamine donor required for the synthesis of the polyamines spermine and spermidine from the diamine putrescine. The sequence is that of S-adenosylmethionine decarboxylase proenzyme from Alkaliphilus oremlandii (strain OhILAs) (Clostridium oremlandii (strain OhILAs)).